The chain runs to 156 residues: Small ribosomal subunit protein uS7 (156 aa).

The protein belongs to the universal ribosomal protein uS7 family. As to quaternary structure, part of the 30S ribosomal subunit. Contacts proteins S9 and S11.

Functionally, one of the primary rRNA binding proteins, it binds directly to 16S rRNA where it nucleates assembly of the head domain of the 30S subunit. Is located at the subunit interface close to the decoding center, probably blocks exit of the E-site tRNA. This chain is Small ribosomal subunit protein uS7, found in Rhodococcus erythropolis (strain PR4 / NBRC 100887).